The following is a 138-amino-acid chain: Large ribosomal subunit protein uL16 (138 aa).

The segment covering 1–13 (MLQPKRRKYRKEQ) has biased composition (basic residues). The tract at residues 1–24 (MLQPKRRKYRKEQKGRNTGKATRG) is disordered.

The protein belongs to the universal ribosomal protein uL16 family. In terms of assembly, part of the 50S ribosomal subunit.

Binds 23S rRNA and is also seen to make contacts with the A and possibly P site tRNAs. The protein is Large ribosomal subunit protein uL16 of Cupriavidus necator (strain ATCC 17699 / DSM 428 / KCTC 22496 / NCIMB 10442 / H16 / Stanier 337) (Ralstonia eutropha).